A 598-amino-acid polypeptide reads, in one-letter code: Peroxisomal multifunctional enzyme type 2 (598 aa).

A (3R)-hydroxyacyl-CoA dehydrogenase region spans residues 1–309 (MSSSDGKLRY…LEVLEKLKEG (309 aa)). Residues 16–40 (VVTGAGAGLGREYALLFAERGAKVV), leucine 24, aspartate 43, 78–79 (SV), and asparagine 102 contribute to the NAD(+) site. A substrate-binding site is contributed by serine 154. Residue tyrosine 167 is the Proton acceptor of the active site. Residues 167–171 (YTAAK) and 199–202 (AASR) contribute to the NAD(+) site. Residues 310 to 598 (GGDAIEDAFE…VDLKSSQAKL (289 aa)) are enoyl-CoA hydratase 2. (3R)-3-hydroxydecanoyl-CoA contacts are provided by residues 390-391 (HG), lysine 419, 496-501 (DKNPLH), glycine 519, and phenylalanine 549. One can recognise a MaoC-like domain in the interval 469–586 (PAPNRQPDAT…VETGKEVISG (118 aa)). Positions 596–598 (AKL) match the Microbody targeting signal motif.

It belongs to the short-chain dehydrogenases/reductases (SDR) family. As to quaternary structure, homodimer.

Its subcellular location is the peroxisome. It catalyses the reaction a (3R)-3-hydroxyacyl-CoA + NAD(+) = a 3-oxoacyl-CoA + NADH + H(+). It carries out the reaction a (3R)-3-hydroxyacyl-CoA = a (2E)-enoyl-CoA + H2O. Its pathway is lipid metabolism; fatty acid beta-oxidation. Its function is as follows. Bifunctional enzyme acting on the peroxisomal beta-oxidation pathway for fatty acids. The sequence is that of Peroxisomal multifunctional enzyme type 2 from Drosophila melanogaster (Fruit fly).